Here is a 162-residue protein sequence, read N- to C-terminus: MNPRRKKRLTLAVALIGGVAAIASLLLYALNSNLNLFYTPSEIVNGKTDTGVKPDVGQRIRVGGMVTVGSMVRDPDSLHVQFAVHDSLGGEILVTYDDLLPDLFREGQGIVAQGVLTAEGKLEATEVLAKHDENYMPPEVAEAMGQKHEKLDYSQQKAPDTK.

The Cytoplasmic segment spans residues 1 to 8 (MNPRRKKR). The chain crosses the membrane as a helical; Signal-anchor for type II membrane protein span at residues 9 to 29 (LTLAVALIGGVAAIASLLLYA). Topologically, residues 30 to 162 (LNSNLNLFYT…YSQQKAPDTK (133 aa)) are periplasmic. Residues His131 and Tyr135 each contribute to the heme site. The tract at residues 139–162 (EVAEAMGQKHEKLDYSQQKAPDTK) is disordered. A compositionally biased stretch (polar residues) spans 153–162 (YSQQKAPDTK).

The protein belongs to the CcmE/CycJ family.

It localises to the cell inner membrane. Heme chaperone required for the biogenesis of c-type cytochromes. Transiently binds heme delivered by CcmC and transfers the heme to apo-cytochromes in a process facilitated by CcmF and CcmH. The sequence is that of Cytochrome c-type biogenesis protein CcmE from Shewanella putrefaciens (strain CN-32 / ATCC BAA-453).